A 264-amino-acid chain; its full sequence is Probable aquaporin TIP3-1 (264 aa).

2 consecutive transmembrane segments (helical) span residues 28–48 (AAISEFLATAIFVFAAEGSIL) and 62–82 (GLVAVSLAHALALAVAVAVAV). Residues 90 to 92 (NPA) carry the NPA 1 motif. 3 helical membrane-spanning segments follow: residues 105-125 (LIRALFYWLAQLLGAVVATLL), 149-169 (AVLLEATMTFGLMYAYYATVI), and 176-196 (VGTIAPLAVGFLLGANMLAGG). Residues 204–206 (NPA) carry the NPA 2 motif. Residues 224–244 (YWLGPFVGAGLAGLLYEYLVI) traverse the membrane as a helical segment.

This sequence belongs to the MIP/aquaporin (TC 1.A.8) family. TIP (TC 1.A.8.10) subfamily. Expressed in leaves and at lower levels in roots.

The protein resides in the vacuole membrane. In terms of biological role, aquaporins facilitate the transport of water and small neutral solutes across cell membranes. May be involved in transport from the vacuolar compartment to the cytoplasm. The polypeptide is Probable aquaporin TIP3-1 (TIP3-1) (Oryza sativa subsp. japonica (Rice)).